An 813-amino-acid polypeptide reads, in one-letter code: Ubiquitin carboxyl-terminal hydrolase 45 (813 aa).

A compositionally biased stretch (basic and acidic residues) spans Met1–Gly14. Positions Met1–Asp27 are disordered. An interaction with ERCC1 region spans residues Met1 to Cys62. A phosphoserine mark is found at Ser28 and Ser29. A UBP-type zinc finger spans residues Leu36–His153. Zn(2+)-binding residues include Cys38, His40, Cys62, Cys65, Cys85, Cys88, Cys93, His101, His105, His114, Cys127, and Cys130. One can recognise a USP domain in the interval Lys191–Ile812. Cys200 serves as the catalytic Nucleophile. Basic and acidic residues-rich tracts occupy residues Leu405–Lys414 and Trp450–Asn466. The interval Leu405–Glu552 is disordered. Residues Pro472–Asp488 show a composition bias toward polar residues. Residues Ser507 and Ser525 each carry the phosphoserine modification. The span at Ser521–Pro533 shows a compositional bias: basic and acidic residues. His745 functions as the Proton acceptor in the catalytic mechanism.

This sequence belongs to the peptidase C19 family. As to quaternary structure, interacts with ERCC1. The catalytically active form interacts with SPDL1. As to expression, retina.

The protein localises to the photoreceptor inner segment. It is found in the cytoplasm. Its subcellular location is the nucleus. The catalysed reaction is Thiol-dependent hydrolysis of ester, thioester, amide, peptide and isopeptide bonds formed by the C-terminal Gly of ubiquitin (a 76-residue protein attached to proteins as an intracellular targeting signal).. Functionally, catalyzes the deubiquitination of SPDL1. Plays a role in the repair of UV-induced DNA damage via deubiquitination of ERCC1, promoting its recruitment to DNA damage sites. May be involved in the maintenance of photoreceptor function. May play a role in normal retinal development. Plays a role in cell migration. The sequence is that of Ubiquitin carboxyl-terminal hydrolase 45 (Usp45) from Mus musculus (Mouse).